Here is a 300-residue protein sequence, read N- to C-terminus: ATP-dependent (S)-NAD(P)H-hydrate dehydratase (300 aa).

Positions 14 to 293 (LLALFKTVVP…NQIPSVFQTE (280 aa)) constitute a YjeF C-terminal domain. (6S)-NADPHX contacts are provided by residues Gly114 and 167–173 (NVMEFQR). Residues 198-202 (KGAND) and 219-228 (GSGRRCGGQG) each bind ATP. Asp229 lines the (6S)-NADPHX pocket.

This sequence belongs to the NnrD/CARKD family. Requires Mg(2+) as cofactor.

The catalysed reaction is (6S)-NADHX + ATP = ADP + phosphate + NADH + H(+). It catalyses the reaction (6S)-NADPHX + ATP = ADP + phosphate + NADPH + H(+). Catalyzes the dehydration of the S-form of NAD(P)HX at the expense of ATP, which is converted to ADP. Together with NAD(P)HX epimerase, which catalyzes the epimerization of the S- and R-forms, the enzyme allows the repair of both epimers of NAD(P)HX, a damaged form of NAD(P)H that is a result of enzymatic or heat-dependent hydration. The polypeptide is ATP-dependent (S)-NAD(P)H-hydrate dehydratase (Drosophila melanogaster (Fruit fly)).